The sequence spans 734 residues: Terpene cyclase/mutase ntnI (734 aa).

Polar residues predominate over residues 1 to 12 (MQSHIGQWTSTA). Residues 1-26 (MQSHIGQWTSTAKGHLSRDENGDEKT) are disordered. A compositionally biased stretch (basic and acidic residues) spans 16 to 26 (LSRDENGDEKT). 4 PFTB repeats span residues 130–172 (AIEI…RLLG), 493–534 (LHNA…SGKT), 570–610 (RTRG…ALAG), and 619–668 (SRKG…GLMH).

The protein belongs to the terpene cyclase/mutase family.

It participates in secondary metabolite biosynthesis; terpenoid biosynthesis. Terpene cyclase/mutase; part of the gene cluster that mediates the biosynthesis of the meroterpenoids nectripenoids A and B, as well as cochliquninone D and isocochliquninone E. The pathway probably begins with the HR-PKS ntnH that catalyzes two chain-extension steps to form a reduced triketide, which then primes the SAT domain in the NR-PKS ntnG to initiate three more cycles of extension to give a linear hexaketide corresponding to the polyketide part of nectripenoids. The FAD-dependent monooxygenase ntnJ then performs an oxidative decarboxylation at C11 of the ntnH/ntnG product, via an electrophilic aromatic hydroxylation with concomitant ipso-decarboxylation. The membrane-bound polyprenyl transferase ntnF then introduces a farnesyl group before the FAD-dependent monooxygenase ntnK functions as the first epoxidase on terminal C12'-C13' olefin, followed by a second epoxidation on C7'-C8' catalyzed by ntnA. The terpene cyclase/mutase ntnI then initiates the sequential tricyclic ring formation through protonation of the terminal epoxide and catalyzes the regioselective and stereoselective 6/6/6-tricyclic ring formation. The cytochrome P450 monooxygenase ntnM may then hydroxylate C1'. The sequence is that of Terpene cyclase/mutase ntnI from Nectria sp.